The following is a 264-amino-acid chain: Undecaprenyl-diphosphatase (264 aa).

7 consecutive transmembrane segments (helical) span residues 42-62, 82-102, 109-129, 146-166, 184-204, 215-235, and 243-263; these read ESLL…LVVF, TQFS…GLLF, LFGG…LLLW, AFII…RSGA, FSFL…LMSG, ILAT…TWMI, and LSWF…FAYA.

It belongs to the UppP family.

It is found in the cell membrane. It carries out the reaction di-trans,octa-cis-undecaprenyl diphosphate + H2O = di-trans,octa-cis-undecaprenyl phosphate + phosphate + H(+). In terms of biological role, catalyzes the dephosphorylation of undecaprenyl diphosphate (UPP). Confers resistance to bacitracin. The sequence is that of Undecaprenyl-diphosphatase from Christiangramia forsetii (strain DSM 17595 / CGMCC 1.15422 / KT0803) (Gramella forsetii).